A 198-amino-acid polypeptide reads, in one-letter code: Chorion protein S19 (198 aa).

An N-terminal signal peptide occupies residues methionine 1–alanine 16.

Belongs to the chorion protein S19 family.

The protein resides in the secreted. Chorion membrane (egg shell) protein; plays a role in protecting the egg from the environment. In Drosophila virilis (Fruit fly), this protein is Chorion protein S19 (Cp19).